The sequence spans 222 residues: 3-dehydroquinate dehydratase (222 aa).

Residues 29 to 31 (ELR) and Arg-55 contribute to the 3-dehydroquinate site. The active-site Proton donor/acceptor is His-112. The Schiff-base intermediate with substrate role is filled by Lys-139. 3-dehydroquinate contacts are provided by Arg-178, Ser-199, and Gln-203.

The protein belongs to the type-I 3-dehydroquinase family. Homodimer.

The catalysed reaction is 3-dehydroquinate = 3-dehydroshikimate + H2O. It functions in the pathway metabolic intermediate biosynthesis; chorismate biosynthesis; chorismate from D-erythrose 4-phosphate and phosphoenolpyruvate: step 3/7. Involved in the third step of the chorismate pathway, which leads to the biosynthesis of aromatic amino acids. Catalyzes the cis-dehydration of 3-dehydroquinate (DHQ) and introduces the first double bond of the aromatic ring to yield 3-dehydroshikimate. This Dehalococcoides mccartyi (strain ATCC BAA-2266 / KCTC 15142 / 195) (Dehalococcoides ethenogenes (strain 195)) protein is 3-dehydroquinate dehydratase.